Reading from the N-terminus, the 620-residue chain is UvrABC system protein C (620 aa).

The GIY-YIG domain maps to 13-92 (DKPGVYIMKN…IKKYSPRYNI (80 aa)). In terms of domain architecture, UVR spans 204–239 (TSIIKNLKLEMEKAAEELEFEKAAKIRDRILAIELI).

The protein belongs to the UvrC family. In terms of assembly, interacts with UvrB in an incision complex.

It localises to the cytoplasm. The UvrABC repair system catalyzes the recognition and processing of DNA lesions. UvrC both incises the 5' and 3' sides of the lesion. The N-terminal half is responsible for the 3' incision and the C-terminal half is responsible for the 5' incision. The chain is UvrABC system protein C from Clostridium perfringens (strain SM101 / Type A).